The sequence spans 396 residues: Elongation factor Tu 1 (396 aa).

The tr-type G domain maps to 10–206; that stretch reads KLHVNVGTIG…ALDTFIPDPT (197 aa). The G1 stretch occupies residues 19 to 26; sequence GHVDHGKT. Residue 19–26 coordinates GTP; sequence GHVDHGKT. A Mg(2+)-binding site is contributed by T26. Residues 60 to 64 form a G2 region; sequence GITIS. The tract at residues 81–84 is G3; it reads DCPG. GTP-binding positions include 81-85 and 136-139; these read DCPGH and NKAD. The G4 stretch occupies residues 136–139; that stretch reads NKAD. The segment at 174 to 176 is G5; sequence SAR.

This sequence belongs to the TRAFAC class translation factor GTPase superfamily. Classic translation factor GTPase family. EF-Tu/EF-1A subfamily. Monomer.

It localises to the cytoplasm. The catalysed reaction is GTP + H2O = GDP + phosphate + H(+). Its function is as follows. GTP hydrolase that promotes the GTP-dependent binding of aminoacyl-tRNA to the A-site of ribosomes during protein biosynthesis. This Xanthomonas campestris pv. campestris (strain B100) protein is Elongation factor Tu 1.